A 301-amino-acid polypeptide reads, in one-letter code: Acetyl-coenzyme A carboxylase carboxyl transferase subunit beta (301 aa).

The 270-residue stretch at 25–294 (LWIKCPETGE…SAANDMNGGA (270 aa)) folds into the CoA carboxyltransferase N-terminal domain.

Belongs to the AccD/PCCB family. As to quaternary structure, acetyl-CoA carboxylase is a heterohexamer composed of biotin carboxyl carrier protein (AccB), biotin carboxylase (AccC) and two subunits each of ACCase subunit alpha (AccA) and ACCase subunit beta (AccD).

The protein resides in the cytoplasm. The enzyme catalyses N(6)-carboxybiotinyl-L-lysyl-[protein] + acetyl-CoA = N(6)-biotinyl-L-lysyl-[protein] + malonyl-CoA. It participates in lipid metabolism; malonyl-CoA biosynthesis; malonyl-CoA from acetyl-CoA: step 1/1. Its function is as follows. Component of the acetyl coenzyme A carboxylase (ACC) complex. Biotin carboxylase (BC) catalyzes the carboxylation of biotin on its carrier protein (BCCP) and then the CO(2) group is transferred by the transcarboxylase to acetyl-CoA to form malonyl-CoA. The protein is Acetyl-coenzyme A carboxylase carboxyl transferase subunit beta of Rhizobium etli (strain CIAT 652).